The sequence spans 209 residues: Large ribosomal subunit protein uL3 (209 aa).

Positions Gly-112–Asn-122 are enriched in polar residues. The segment at Gly-112–Met-146 is disordered.

It belongs to the universal ribosomal protein uL3 family. As to quaternary structure, part of the 50S ribosomal subunit. Forms a cluster with proteins L14 and L19.

Functionally, one of the primary rRNA binding proteins, it binds directly near the 3'-end of the 23S rRNA, where it nucleates assembly of the 50S subunit. This chain is Large ribosomal subunit protein uL3, found in Lactobacillus johnsonii (strain CNCM I-12250 / La1 / NCC 533).